The following is a 350-amino-acid chain: WD repeat-containing protein DWA2 (350 aa).

WD repeat units lie at residues 39–79 (KEEN…FDQR), 118–158 (AHVG…KSAE), 166–205 (GMRHSLSGGAWNPHDVNSVAATSESSIQFWDLRTMKKNNS), 206–246 (IERA…FPVQ), 250–290 (GHTH…EHKT), and 311–350 (DYEDSVYGLAWSSREPWIFASLSYDGRVVIESVKPFLPRR).

Interacts with ABI5 and DDB1A and DWA1.

The protein localises to the nucleus. It participates in protein modification; protein ubiquitination. Functionally, component of the CUL4-RBX1-DDB1-DWA1/DWA2 E3 ubiquitin-protein ligase complex that acts as a negative regulator in abscisic acid (ABA) signaling. May function as the substrate recognition module within this complex leading to ABI5 degradation. Functionally redundant with DWA1. In Arabidopsis thaliana (Mouse-ear cress), this protein is WD repeat-containing protein DWA2 (DWA2).